Reading from the N-terminus, the 368-residue chain is Cyclin-dependent kinase 2 (368 aa).

One can recognise a Protein kinase domain in the interval 45–330 (FCSLRRIGEG…AKGALSHRYF (286 aa)). Residues 51–59 (IGEGTYGVV) and Lys74 each bind ATP. Asp170 acts as the Proton acceptor in catalysis. Residues Asn175 and Asp188 each contribute to the Mg(2+) site.

It belongs to the protein kinase superfamily. CMGC Ser/Thr protein kinase family. CDC2/CDKX subfamily. As to quaternary structure, interacts with cye-1; the interaction likely regulates cdk-2 activity and is probably required for gld-1 phosphorylation. Requires Mg(2+) as cofactor.

The enzyme catalyses L-seryl-[protein] + ATP = O-phospho-L-seryl-[protein] + ADP + H(+). It carries out the reaction L-threonyl-[protein] + ATP = O-phospho-L-threonyl-[protein] + ADP + H(+). In terms of biological role, serine/threonine-protein kinase which, in association with cye-1, regulates proliferation, quiescent state and cell fate during the development of several cell lineages. In the embryo, initiates the establishment of cell polarity through the recruitment of the centrosomal proteins spd-2 and spd-5 during prophase. Phosphorylation and inhibition of the translational repressor gld-1 by the cdk-2/cye-1 complex regulates the pool of germline stem cells and the size of the mitotic zone in the gonads by preventing entry into meiosis. This Caenorhabditis elegans protein is Cyclin-dependent kinase 2.